The primary structure comprises 1663 residues: MATDGASCEPDLSRAPEDAAGAAAEAAKKEFDVDTLSKSELRMLLSVMEGELEARDLVIEALRARRKEVFIQERYGRFNLNDPFLALQRDYEAGAGDKEKKPVCTNPLSILEAVMAHCKKMQERMSAQLAAAESRQKKLEMEKLQLQALEQEHKKLAARLEEERGKNKQVVLMLVKECKQLSGKVIEEAQKLEDVMAKLEEEKKKTNELEEELSAEKRRSTEMEAQMEKQLSEFDTEREQLRAKLNREEAHTTDLKEEIDKMRKMIEQLKRGSDSKPSLSLPRKTKDRRLVSISVGTEGTVTRSVACQTDLVTENADHMKKLPLTMPVKPSTGSPLVSANAKGSVCTSATMARPGIDRQASYGDLIGASVPAFPPPSANKIEENGPSTGSTPDPTSSTPPLPSNAAPPTAQTPGIAPQNSQAPPMHSLHSPCANTSLHPGLNPRIQAARFRFQGNANDPDQNGNTTQSPPSRDVSPTSRDNLVAKQLARNTVTQALSRFTSPQAGAPSRPGVPPTGDVGTHPPVGRTSLKTHGVARVDRGNPPPIPPKKPGLSQTPSPPHPQLKVIIDSSRASNTGAKVDNKTVASTPSSLPQGNRVINEENLPKSSSPQLPPKPSIDLTVAPAGCAVSALATSQVGAWPAATPGLNQPACSDSSLVIPTTIAFCSSINPVSASSCRPGASDSLLVTASGWSPSLTPLLMSGGPAPLAGRPTLLQQAAAQGNVTLLSMLLNEEGLDINYSCEDGHSALYSAAKNGHTDCVRLLLSAEAQVNAADKNGFTPLCAAAAQGHFECVELLISYDANINHAADGGQTPLYLACKNGNKECIKLLLEAGTNRSVKTTDGWTPVHAAVDTGNVDSLKLLMYHRIPAHGNSFNEEESESSVFDLDGGEESPEGISKPVVPADLINHANREGWTAAHIAASKGFKNCLEILCRHGGLEPERRDKCNRTVHDVATDDCKHLLENLNALKIPLRISVGEIEPSNYGSDDLECENTICALNIRKQTSWDDFSKAVSQALTNHFQAISSDGWWSLEDVTCNNTTDSNIGLSARSIRSITLGNVPWSVGQSFAQSPWDFMRKNKAEHITVLLSGPQEGCLSSVTYASMIPLQMMQNYLRLVEQYHNVIFHGPEGSLQDYIVHQLALCLKHRQMAAGFSCEIVRAEVDAGFSKEQLLDLFISSACLIPVKQSPSKKKIIIILENLEKSSLSELLRDFLAPLENRSTESPCTFQKGNGLSECYYFHENCFLMGTIAKACLQGSDLLVQQHFRWVQLRWDGEPMQGLLQRFLRRKVVNKFKGQAPSPCDPVCKIVDWALSVWRQLNSCLARLGTPEALLGPKYFLSCPVVPGHAQVTVKWMSKLWNGVIAPRVQEAILSRASVKRQPGFGQTTAKRHPSQGQQAVVKAALSILLNKAVLHGCPLPRAELDQHTADFKGGSFPLSIVSSYNTCNKKKGESGAWRKVNTSPRRKSGRFSLPTWNKPDLSTEGMKNKTISQLNCNRNASLSKQKSLENDLSLTLNLDQRLSLGSDDEADLVKELQSMCSSKSESDISKIADSRDDLRMFDSSGNNPVLSATINNLRMPVSQKEVSPLSSHQTTECSNSKSKTELGVSRVKSFLPVPRSKVTQCSQNTKRSSSSSNTRQIEINNNSKEVNWNLHKNEHLEKPNK.

Disordered stretches follow at residues 1-23 (MATD…AGAA), 203-222 (KKKT…RSTE), 367-440 (GASV…LHPG), 454-478 (GNAN…SPTS), and 498-616 (RFTS…PKPS). Positions 119–276 (KKMQERMSAQ…EQLKRGSDSK (158 aa)) form a coiled coil. Low complexity predominate over residues 386 to 396 (PSTGSTPDPTS). At Arg-498 the chain carries Asymmetric dimethylarginine. The segment covering 583–593 (TVASTPSSLPQ) has biased composition (polar residues). ANK repeat units follow at residues 709-739 (GRPT…DINY), 743-772 (DGHS…QVNA), 776-805 (NGFT…NINH), 809-838 (GGQT…NRSV), 842-871 (DGWT…PAHG), and 912-942 (EGWT…EPER). The disordered stretch occupies residues 1449–1482 (KGESGAWRKVNTSPRRKSGRFSLPTWNKPDLSTE). Position 1524 is a phosphoserine (Ser-1524). Positions 1581–1663 (QKEVSPLSSH…KNEHLEKPNK (83 aa)) are disordered. The segment covering 1582 to 1599 (KEVSPLSSHQTTECSNSK) has biased composition (polar residues). Over residues 1624-1638 (SQNTKRSSSSSNTRQ) the composition is skewed to low complexity. The segment covering 1639 to 1648 (IEINNNSKEV) has biased composition (polar residues). Basic and acidic residues predominate over residues 1653–1663 (HKNEHLEKPNK).

Interacts with CTTN/cortactin SH3 domain. Interacts with STRN, STRN4/zinedin and MOB4/phocein; this interactions mediate the association with the STRIPAK core complex and may regulate dendritic spine distribution of the STRIPAK complex in hippocampal neurons. Activation of glutamate receptors weakens the interaction with STRN and STRN4. In terms of tissue distribution, highest expression in brain. Also expressed in kidney, pancreas, lung, heart, liver, skeletal muscle and placenta.

The protein resides in the cytoplasm. It is found in the cell cortex. It localises to the cell projection. The protein localises to the dendritic spine. In terms of biological role, regulates the dendritic spine distribution of CTTN/cortactin in hippocampal neurons, and thus controls dendritic spinogenesis and dendritic spine maintenance. Associates with the striatin-interacting phosphatase and kinase (STRIPAK) core complex to regulate dendritic spine distribution of the STRIPAK complex in hippocampal neurons. This is Cortactin-binding protein 2 from Homo sapiens (Human).